The chain runs to 148 residues: Probable calcium-binding protein CML7 (148 aa).

3 consecutive EF-hand domains span residues 9–44, 80–115, and 116–148; these read EQVASMREAFSLFDTDGDGRIAPSELGVLMRSLGGN, PFDRPLRDAFRVLDKDASGTVSVADLRHVLTSIGEK, and LEPHEFDEWIREVDVAPDGTIRYDDFIRRIVAK. Residues D22, D24, D26, R28, E33, D93, D95, S97, T99, and D104 each contribute to the Ca(2+) site.

In terms of biological role, potential calcium sensor. The protein is Probable calcium-binding protein CML7 (CML7) of Oryza sativa subsp. japonica (Rice).